We begin with the raw amino-acid sequence, 525 residues long: ATP synthase subunit alpha (525 aa).

An ATP-binding site is contributed by 172-179 (GDRQTGKT).

This sequence belongs to the ATPase alpha/beta chains family. In terms of assembly, F-type ATPases have 2 components, CF(1) - the catalytic core - and CF(0) - the membrane proton channel. CF(1) has five subunits: alpha(3), beta(3), gamma(1), delta(1), epsilon(1). CF(0) has three main subunits: a(1), b(2) and c(9-12). The alpha and beta chains form an alternating ring which encloses part of the gamma chain. CF(1) is attached to CF(0) by a central stalk formed by the gamma and epsilon chains, while a peripheral stalk is formed by the delta and b chains.

It is found in the cell inner membrane. The catalysed reaction is ATP + H2O + 4 H(+)(in) = ADP + phosphate + 5 H(+)(out). Produces ATP from ADP in the presence of a proton gradient across the membrane. The alpha chain is a regulatory subunit. The polypeptide is ATP synthase subunit alpha (Parabacteroides distasonis (strain ATCC 8503 / DSM 20701 / CIP 104284 / JCM 5825 / NCTC 11152)).